Consider the following 446-residue polypeptide: UDP-N-acetylmuramoylalanine--D-glutamate ligase (446 aa).

Residue G115–T121 participates in ATP binding.

This sequence belongs to the MurCDEF family.

The protein localises to the cytoplasm. It catalyses the reaction UDP-N-acetyl-alpha-D-muramoyl-L-alanine + D-glutamate + ATP = UDP-N-acetyl-alpha-D-muramoyl-L-alanyl-D-glutamate + ADP + phosphate + H(+). The protein operates within cell wall biogenesis; peptidoglycan biosynthesis. Functionally, cell wall formation. Catalyzes the addition of glutamate to the nucleotide precursor UDP-N-acetylmuramoyl-L-alanine (UMA). This Pelobacter propionicus (strain DSM 2379 / NBRC 103807 / OttBd1) protein is UDP-N-acetylmuramoylalanine--D-glutamate ligase.